The chain runs to 77 residues: uncharacterized protein (77 aa).

This is an uncharacterized protein from Haemophilus phage HP1 (strain HP1c1) (Bacteriophage HP1).